Here is a 297-residue protein sequence, read N- to C-terminus: 3-mercaptopyruvate sulfurtransferase (297 aa).

An N-acetylalanine modification is found at A2. A phosphoserine mark is found at S3, W15, P23, and S35. The Rhodanese 1 domain maps to 25–144 (AGQPLQLLDA…WLRQNLPLSS (120 aa)). K40 bears the N6-acetyllysine; alternate mark. N6-succinyllysine; alternate is present on K40. The hinge stretch occupies residues 145–160 (GKSQPAPAEFRAQLDP). K146 and K164 each carry N6-succinyllysine. The region spanning 174 to 288 (ESRRFQVVDS…WYMRARPEDV (115 aa)) is the Rhodanese 2 domain. Position 188 (R188) interacts with substrate. The Cysteine persulfide intermediate role is filled by C248.

In terms of assembly, monomer (active form). Homodimer; disulfide-linked (inactive form).

Its subcellular location is the cytoplasm. It localises to the mitochondrion. The protein resides in the synapse. The protein localises to the synaptosome. It carries out the reaction 2-oxo-3-sulfanylpropanoate + [thioredoxin]-dithiol = [thioredoxin]-disulfide + hydrogen sulfide + pyruvate + H(+). With respect to regulation, by oxidative stress, and thioredoxin. Under oxidative stress conditions, the catalytic cysteine site is converted to a sulfenate which inhibits the MPST enzyme activity. Reduced thioredoxin cleaves an intersubunit disulfide bond to turn on the redox switch and reactivate the enzyme. In terms of biological role, transfer of a sulfur ion to cyanide or to other thiol compounds. Also has weak rhodanese activity. Detoxifies cyanide and is required for thiosulfate biosynthesis. Acts as an antioxidant. In combination with cysteine aminotransferase (CAT), contributes to the catabolism of cysteine and is an important producer of hydrogen sulfide in the brain, retina and vascular endothelial cells. Hydrogen sulfide H(2)S is an important synaptic modulator, signaling molecule, smooth muscle contractor and neuroprotectant. Its production by the 3MST/CAT pathway is regulated by calcium ions. This chain is 3-mercaptopyruvate sulfurtransferase (MPST), found in Homo sapiens (Human).